The chain runs to 208 residues: uncharacterized protein (208 aa).

This is an uncharacterized protein from Legionella pneumophila subsp. pneumophila (strain Philadelphia 1 / ATCC 33152 / DSM 7513).